Consider the following 94-residue polypeptide: Large ribosomal subunit protein bL27 (94 aa).

Residues 1–9 constitute a propeptide that is removed on maturation; sequence MLELNLQLF. A disordered region spans residues 12-33; the sequence is KKGGGSTSNGRDSQAKRLGAKA.

This sequence belongs to the bacterial ribosomal protein bL27 family. In terms of processing, the N-terminus is cleaved by ribosomal processing cysteine protease Prp.

The sequence is that of Large ribosomal subunit protein bL27 from Lactococcus lactis subsp. cremoris (strain MG1363).